The following is a 620-amino-acid chain: MLPPQQPIHAELEHGRRTSAGSHAAQLARSPSMSLSPRSQNQSLPYPSSRPGSAAGSAHPFGYDPRQGTLSPVLSARRTSEDQPRPTSSSSASGRRYTEPASQTPAPAPLGSSAYRPRHTSTPGNPSSAYAPRFTPQPTTTPSSPSTSQHTPYTPHHSAPPRILHYNPHRQSAPSSVLRPIYPDEVAHLRQLAHANNPLRQKPAARRYSYSGGRAPEPTPTPRTSLPGENDHSYFPPQWDDRPSMPPSEVSYGGPPSSTPGAPPSGYSQYPPNWEAQTPGGNWDGERPGRLGKRRARDEEDDEYERNKRVVSGPVAGQAYSKKVTVVAEHYNSRPEVGVERREFSPIIGLKKFNNWIKSVLIGKFAYRPRGKVLDVGCGKGGDLNKWKQARIALYVGLDVADQSVQQAADRYRRMPKPGFDAFFYAHDCFSNPLSDVLSPELQIKDLYDNVTMQFCMHYAFENAAKARMMIENVSRYLRRGGIFIGTIPNAELLLERLNELPDRDEELRFGNSCYSIQFTERRHKGVYGHDYRFYLTDAVEDVPEYLVDWENFVSLASESGLRLVYKKAFHEILQEEKDSRDFGPLLGKMGVLNEYGESAMDADQWEAANLYMGFAFEKM.

2 disordered regions span residues 1–176 (MLPP…APSS) and 193–304 (AHAN…DDEY). Polar residues predominate over residues 29–44 (RSPSMSLSPRSQNQSL). 2 stretches are compositionally biased toward low complexity: residues 45-60 (PYPS…SAHP) and 136-157 (PQPT…TPHH). In terms of domain architecture, mRNA cap 0 methyltransferase spans 345–620 (SPIIGLKKFN…LYMGFAFEKM (276 aa)). 354-355 (NN) is an mRNA binding site. S-adenosyl-L-methionine contacts are provided by K358, G377, D399, D428, Q454, and Y459.

The protein belongs to the class I-like SAM-binding methyltransferase superfamily. mRNA cap 0 methyltransferase family.

It is found in the nucleus. The catalysed reaction is a 5'-end (5'-triphosphoguanosine)-ribonucleoside in mRNA + S-adenosyl-L-methionine = a 5'-end (N(7)-methyl 5'-triphosphoguanosine)-ribonucleoside in mRNA + S-adenosyl-L-homocysteine. Its function is as follows. Responsible for methylating the 5'-cap structure of mRNAs. This is mRNA cap guanine-N(7) methyltransferase (ABD1) from Cryptococcus neoformans var. neoformans serotype D (strain JEC21 / ATCC MYA-565) (Filobasidiella neoformans).